We begin with the raw amino-acid sequence, 176 residues long: Ribosome maturation factor RimM (176 aa).

One can recognise a PRC barrel domain in the interval 97 to 176 (EDDFYWRDLI…QICVDWDPGF (80 aa)).

Belongs to the RimM family. Binds ribosomal protein uS19.

Its subcellular location is the cytoplasm. Its function is as follows. An accessory protein needed during the final step in the assembly of 30S ribosomal subunit, possibly for assembly of the head region. Essential for efficient processing of 16S rRNA. May be needed both before and after RbfA during the maturation of 16S rRNA. It has affinity for free ribosomal 30S subunits but not for 70S ribosomes. The sequence is that of Ribosome maturation factor RimM from Colwellia psychrerythraea (strain 34H / ATCC BAA-681) (Vibrio psychroerythus).